The primary structure comprises 273 residues: Dermonecrotic toxin LdSicTox-alphaIB1avi (273 aa).

His-5 is a catalytic residue. Mg(2+) contacts are provided by Glu-25 and Asp-27. His-41 serves as the catalytic Nucleophile. 2 disulfide bridges follow: Cys-45–Cys-51 and Cys-47–Cys-190. Asp-85 contributes to the Mg(2+) binding site. N-linked (GlcNAc...) asparagine glycosylation is present at Asn-250.

The protein belongs to the arthropod phospholipase D family. Class II subfamily. It depends on Mg(2+) as a cofactor. In terms of tissue distribution, expressed by the venom gland.

Its subcellular location is the secreted. It carries out the reaction an N-(acyl)-sphingosylphosphocholine = an N-(acyl)-sphingosyl-1,3-cyclic phosphate + choline. It catalyses the reaction an N-(acyl)-sphingosylphosphoethanolamine = an N-(acyl)-sphingosyl-1,3-cyclic phosphate + ethanolamine. The enzyme catalyses a 1-acyl-sn-glycero-3-phosphocholine = a 1-acyl-sn-glycero-2,3-cyclic phosphate + choline. The catalysed reaction is a 1-acyl-sn-glycero-3-phosphoethanolamine = a 1-acyl-sn-glycero-2,3-cyclic phosphate + ethanolamine. Dermonecrotic toxins cleave the phosphodiester linkage between the phosphate and headgroup of certain phospholipids (sphingolipid and lysolipid substrates), forming an alcohol (often choline) and a cyclic phosphate. This toxin acts on sphingomyelin (SM). It may also act on ceramide phosphoethanolamine (CPE), lysophosphatidylcholine (LPC) and lysophosphatidylethanolamine (LPE), but not on lysophosphatidylserine (LPS), and lysophosphatidylglycerol (LPG). It acts by transphosphatidylation, releasing exclusively cyclic phosphate products as second products. Induces dermonecrosis, hemolysis, increased vascular permeability, edema, inflammatory response, and platelet aggregation. The protein is Dermonecrotic toxin LdSicTox-alphaIB1avi of Loxosceles deserta (Desert recluse spider).